Here is a 95-residue protein sequence, read N- to C-terminus: Mammaglobin-B (95 aa).

An N-terminal signal peptide occupies residues 1–18 (MKLLMVLMLAALLLHCYA). N-linked (GlcNAc...) asparagine glycosylation occurs at Asn68.

As to quaternary structure, heterodimer of a lipophilin A and a lipophilin C (mammaglobin B) monomer associated head to head. As to expression, expressed in thymus, trachea, kidney, steroid responsive tissues (prostate, testis, uterus, breast and ovary) and salivary gland.

The protein resides in the secreted. In terms of biological role, may bind androgens and other steroids, may also bind estramustine, a chemotherapeutic agent used for prostate cancer. May be under transcriptional regulation of steroid hormones. The protein is Mammaglobin-B (SCGB2A1) of Homo sapiens (Human).